The following is a 152-amino-acid chain: Superoxide dismutase [Cu-Zn] 1 (152 aa).

H45, H47, and H62 together coordinate Cu cation. The cysteines at positions 56 and 145 are disulfide-linked. Residues H62, H70, H79, and D82 each coordinate Zn(2+). H119 contributes to the Cu cation binding site.

This sequence belongs to the Cu-Zn superoxide dismutase family. Homodimer. The cofactor is Cu cation. Zn(2+) serves as cofactor.

The protein localises to the cytoplasm. The enzyme catalyses 2 superoxide + 2 H(+) = H2O2 + O2. Functionally, destroys radicals which are normally produced within the cells and which are toxic to biological systems. The sequence is that of Superoxide dismutase [Cu-Zn] 1 (SODCC.1) from Solanum lycopersicum (Tomato).